Here is a 1112-residue protein sequence, read N- to C-terminus: DNA repair protein rad13 (1112 aa).

Residues 1 to 95 are N-domain; sequence MGVSGLWDIL…QTIQKRQARR (95 aa). The Mg(2+) site is built by Asp-30 and Asp-77. The 20-residue stretch at 395–414 folds into the UIM domain; that stretch reads TDDLILQLATQQSLEENKKS. The I-domain stretch occupies residues 742–870; sequence KRSEKRDADE…LALEILHEFP (129 aa). 5 residues coordinate Mg(2+): Glu-777, Glu-779, Asp-798, Asp-800, and Asp-849. The disordered stretch occupies residues 1056–1112; sequence KMMASKNSSDSDSDSEDNFLASLTPKTNSSSISIENLPRKTKLSTSLLKKPSKRRRK. Residues 1079–1089 show a composition bias toward polar residues; the sequence is TPKTNSSSISI.

It belongs to the XPG/RAD2 endonuclease family. XPG subfamily. The cofactor is Mg(2+).

It is found in the nucleus. Single-stranded DNA endonuclease involved in excision repair of DNA damaged with UV light, bulky adducts, or cross-linking agents. Essential for the incision step of excision-repair. This chain is DNA repair protein rad13 (rad13), found in Schizosaccharomyces pombe (strain 972 / ATCC 24843) (Fission yeast).